Consider the following 352-residue polypeptide: Uroporphyrinogen decarboxylase (352 aa).

Substrate-binding positions include 27–31, Asp-77, Tyr-154, Thr-209, and His-325; that span reads RQAGR.

This sequence belongs to the uroporphyrinogen decarboxylase family. Homodimer.

Its subcellular location is the cytoplasm. It catalyses the reaction uroporphyrinogen III + 4 H(+) = coproporphyrinogen III + 4 CO2. It participates in porphyrin-containing compound metabolism; protoporphyrin-IX biosynthesis; coproporphyrinogen-III from 5-aminolevulinate: step 4/4. In terms of biological role, catalyzes the decarboxylation of four acetate groups of uroporphyrinogen-III to yield coproporphyrinogen-III. The protein is Uroporphyrinogen decarboxylase of Legionella pneumophila (strain Paris).